Consider the following 256-residue polypeptide: uncharacterized protein (256 aa).

A signal peptide spans 1–22 (MKSIKRIGLCISLLILSIFVTS). Cys-23 carries N-palmitoyl cysteine lipidation. The S-diacylglycerol cysteine moiety is linked to residue Cys-23.

The protein belongs to the staphylococcal tandem lipoprotein family.

It localises to the cell membrane. This is an uncharacterized protein from Staphylococcus aureus (strain USA300).